A 299-amino-acid chain; its full sequence is Probable adenylate kinase 7, mitochondrial (299 aa).

The transit peptide at 1–25 directs the protein to the mitochondrion; the sequence is MAGVLRLAGAARSPLARALAPAARR. 80–85 serves as a coordination point for ATP; the sequence is GPQKHA. The tract at residues 100 to 129 is NMP; the sequence is SMGTLVRQELSPASSLYKKIANSVNEGKLV. Residues arginine 106, 127-129, 157-160, and glutamine 164 each bind AMP; these read KLV and GIPR. Residues arginine 190 and 203–204 each bind ATP; that span reads LF. The LID stretch occupies residues 193-237; sequence GGDICPHCGQLFDFSKTASSDRNPSLGSCTWPSQVQHAAVLGLED.

The protein belongs to the adenylate kinase family.

The protein resides in the mitochondrion. The catalysed reaction is AMP + ATP = 2 ADP. Catalyzes the reversible transfer of the terminal phosphate group between ATP and AMP. Plays an important role in cellular energy homeostasis and in adenine nucleotide metabolism. The chain is Probable adenylate kinase 7, mitochondrial from Oryza sativa subsp. japonica (Rice).